We begin with the raw amino-acid sequence, 178 residues long: Translation initiation factor IF-3 (178 aa).

The protein belongs to the IF-3 family. Monomer.

It is found in the cytoplasm. IF-3 binds to the 30S ribosomal subunit and shifts the equilibrium between 70S ribosomes and their 50S and 30S subunits in favor of the free subunits, thus enhancing the availability of 30S subunits on which protein synthesis initiation begins. In Ureaplasma parvum serovar 3 (strain ATCC 700970), this protein is Translation initiation factor IF-3.